Here is a 219-residue protein sequence, read N- to C-terminus: Thymidylate kinase (219 aa).

9–16 (GIEGCGKT) provides a ligand contact to ATP.

This sequence belongs to the thymidylate kinase family.

It carries out the reaction dTMP + ATP = dTDP + ADP. Functionally, phosphorylation of dTMP to form dTDP in both de novo and salvage pathways of dTTP synthesis. This is Thymidylate kinase from Syntrophus aciditrophicus (strain SB).